A 972-amino-acid polypeptide reads, in one-letter code: Multiple C2 domain and transmembrane region protein 8 (972 aa).

The region spanning 1–107 (MMSNLKLGVE…PYSEAVGLPY (107 aa)) is the C2 1 domain. Residues 142 to 203 (PNLISTKKIP…MMESSLYQAP (62 aa)) form a disordered region. Residues 150–159 (IPSKSRHKFH) show a composition bias toward basic residues. Polar residues predominate over residues 161-173 (IPTNESNHSPRGN). The span at 179–194 (PQPPPPQSQTALPPPM) shows a compositional bias: pro residues. C2 domains are found at residues 232–352 (GGGK…PEWY), 384–507 (ALNA…NRWF), and 543–669 (YSSD…SHSY). Ca(2+) is bound by residues aspartate 265, aspartate 271, aspartate 318, aspartate 320, and aspartate 325. Transmembrane regions (helical) follow at residues 803 to 823 (IIFLVLVCSPEMILPVMSLCL) and 924 to 944 (TVVLYVVPFKVFVLLAGLYIM).

Belongs to the MCTP family. Requires Ca(2+) as cofactor. As to expression, expressed in root hairs.

Its subcellular location is the membrane. It is found in the vesicle. Functionally, may function as a signaling molecule by regulating the trafficking of other regulators. This chain is Multiple C2 domain and transmembrane region protein 8, found in Arabidopsis thaliana (Mouse-ear cress).